The sequence spans 374 residues: 4-hydroxy-3-methylbut-2-en-1-yl diphosphate synthase (flavodoxin) (374 aa).

[4Fe-4S] cluster is bound by residues cysteine 268, cysteine 271, cysteine 303, and glutamate 310.

It belongs to the IspG family. [4Fe-4S] cluster serves as cofactor.

The enzyme catalyses (2E)-4-hydroxy-3-methylbut-2-enyl diphosphate + oxidized [flavodoxin] + H2O + 2 H(+) = 2-C-methyl-D-erythritol 2,4-cyclic diphosphate + reduced [flavodoxin]. It participates in isoprenoid biosynthesis; isopentenyl diphosphate biosynthesis via DXP pathway; isopentenyl diphosphate from 1-deoxy-D-xylulose 5-phosphate: step 5/6. Its function is as follows. Converts 2C-methyl-D-erythritol 2,4-cyclodiphosphate (ME-2,4cPP) into 1-hydroxy-2-methyl-2-(E)-butenyl 4-diphosphate. This chain is 4-hydroxy-3-methylbut-2-en-1-yl diphosphate synthase (flavodoxin), found in Geobacillus kaustophilus (strain HTA426).